The chain runs to 425 residues: Potassium/proton antiporter CemA (425 aa).

Residues 89–109 traverse the membrane as a helical segment; the sequence is LFLTTVKCLFILLFVPLGINF. The insert stretch occupies residues 159–278; it reads LSENQIFFGL…KTDFASVFRT (120 aa). Residues 173–192 are disordered; sequence STFPSSEKSQKSEHFSNQDE. The segment covering 180–192 has biased composition (basic and acidic residues); sequence KSQKSEHFSNQDE. Transmembrane regions (helical) follow at residues 300–320, 350–370, and 386–406; these read IEAI…CYLL, ILFI…ELFF, and IFLL…YLIF.

This sequence belongs to the CemA family.

It is found in the plastid. Its subcellular location is the chloroplast inner membrane. It carries out the reaction K(+)(in) + H(+)(out) = K(+)(out) + H(+)(in). Contributes to K(+)/H(+) antiport activity by supporting proton efflux to control proton extrusion and homeostasis in chloroplasts in a light-dependent manner to modulate photosynthesis. Prevents excessive induction of non-photochemical quenching (NPQ) under continuous-light conditions. Indirectly promotes efficient inorganic carbon uptake into chloroplasts. The chain is Potassium/proton antiporter CemA from Tetradesmus obliquus (Green alga).